The primary structure comprises 243 residues: Probable heat shock transcription factor (243 aa).

The DNA-binding element occupies 9 to 102 (INKFIRRLYK…GDNLLPCIQR (94 aa)). Residues 121 to 164 (QLQDLLQYLNNQNFKLEGEIKSLKDRVDQQDCTINGLVQLLTRI) form an involved in trimerization region.

The protein belongs to the HSF family. As to quaternary structure, homotrimer. Homotrimerization increases the affinity of HSF1 to DNA.

It is found in the nucleus. Its function is as follows. DNA-binding transcription factor that specifically binds heat shock promoter elements (HSE) and activates transcription. This Vairimorpha ceranae (strain BRL01) (Microsporidian parasite) protein is Probable heat shock transcription factor.